The following is a 229-amino-acid chain: Endo-1,4-beta-xylanase 1 (229 aa).

The signal sequence occupies residues 1-19; sequence MVAFSSLICALTSIASTLA. Residues 20-51 constitute a propeptide that is removed on maturation; sequence MPTGLEPESSVNVTERGMYDFVLGAHNDHRRR. An N-linked (GlcNAc...) asparagine glycan is attached at Asn-31. Positions 42-228 constitute a GH11 domain; it reads LGAHNDHRRR…GSGSASQSVS (187 aa). Tyr-117 is a substrate binding site. The Nucleophile role is filled by Glu-126. Tyr-128, Arg-160, Pro-164, Gln-174, and Tyr-209 together coordinate substrate. Glu-215 functions as the Proton donor in the catalytic mechanism.

This sequence belongs to the glycosyl hydrolase 11 (cellulase G) family.

It is found in the secreted. The catalysed reaction is Endohydrolysis of (1-&gt;4)-beta-D-xylosidic linkages in xylans.. Its pathway is glycan degradation; xylan degradation. In terms of biological role, glycoside hydrolase involved in the hydrolysis of xylan, a major plant cell wall hemicellulose made up of 1,4-beta-linked D-xylopyranose residues. Catalyzes the endohydrolysis of the main-chain 1,4-beta-glycosidic bonds connecting the xylose subunits yielding various xylooligosaccharides and xylose. The sequence is that of Endo-1,4-beta-xylanase 1 from Hypocrea jecorina (strain QM6a) (Trichoderma reesei).